The primary structure comprises 368 residues: Chorismate synthase (368 aa).

NADP(+) is bound at residue R46. FMN contacts are provided by residues 124–126 (RAS), G284, 299–303 (KPTPS), and R326.

Belongs to the chorismate synthase family. FMNH2 serves as cofactor.

It catalyses the reaction 5-O-(1-carboxyvinyl)-3-phosphoshikimate = chorismate + phosphate. Its pathway is metabolic intermediate biosynthesis; chorismate biosynthesis; chorismate from D-erythrose 4-phosphate and phosphoenolpyruvate: step 7/7. Its function is as follows. Catalyzes the anti-1,4-elimination of the C-3 phosphate and the C-6 proR hydrogen from 5-enolpyruvylshikimate-3-phosphate (EPSP) to yield chorismate, which is the branch point compound that serves as the starting substrate for the three terminal pathways of aromatic amino acid biosynthesis. This reaction introduces a second double bond into the aromatic ring system. The chain is Chorismate synthase from Pyrobaculum aerophilum (strain ATCC 51768 / DSM 7523 / JCM 9630 / CIP 104966 / NBRC 100827 / IM2).